The sequence spans 346 residues: Ly6/PLAUR domain-containing protein 3 (346 aa).

Residues 1–30 (MDPARKAGAQAMIWTAGWLLLLLLRGGAQA) form the signal peptide. UPAR/Ly6 domains are found at residues 33 to 126 (CYSC…ALDP) and 140 to 222 (CYSC…SRCN). N-linked (GlcNAc...) asparagine glycosylation is found at Asn118, Asn163, Asn176, and Asn183. The segment at 233-324 (PRIPPLVRLP…KGGPQQPHNK (92 aa)) is disordered. Positions 234–246 (RIPPLVRLPPPEP) are enriched in pro residues. Positions 247–269 (TTVASTTSVTTSTSAPVRPTSTT) are enriched in low complexity. The segment covering 283–295 (GVEHEASRDEEPR) has biased composition (basic and acidic residues). A lipid anchor (GPI-anchor amidated cysteine) is attached at Cys326. A propeptide spans 327-346 (VAPTAGLAALLLAVAAGVLL) (removed in mature form).

In terms of assembly, binds laminin-1 and laminin-5. Interacts with LGALS3. Interacts with AGR2 and AGR3. In terms of processing, N-glycosylated and O-glycosylated. As to expression, expressed in placenta, skin and urothelium. Found in suprabasal keratinocytes of chronic wounds. Weak expression is found in esophagus and peripheral blood mononuclear cells. Found in the majority of primary and metastatic transitional cell carcinomas (TCCs) and as well in breast cancer tissues, but not in adjacent normal tissues. High expression is found in the tumor component of some noninvasive superficial lesions and in invasive and metastatic urothelial cancers.

Its subcellular location is the cell membrane. Its function is as follows. Supports cell migration. May be involved in urothelial cell-matrix interactions. May be involved in tumor progression. This chain is Ly6/PLAUR domain-containing protein 3 (LYPD3), found in Homo sapiens (Human).